We begin with the raw amino-acid sequence, 376 residues long: DnaJ homolog subfamily B member 12 (376 aa).

An N-acetylmethionine modification is found at M1. A disordered region spans residues 45–97 (ALIESLNQKPQSTGDHPQPTDTTHTTTKKAGGTETPSANGEAGGGESAKGYTS). Low complexity predominate over residues 57–84 (TGDHPQPTDTTHTTTKKAGGTETPSANG). The 65-residue stretch at 111–175 (DYYEILGVSR…EKRKQYDQFG (65 aa)) folds into the J domain. H186 carries the pros-methylhistidine modification. Residues 243–263 (GGLGVFVQLMPILILILVSAL) form a helical membrane-spanning segment.

Belongs to the DnaJ family. DNAJB12/DNAJB14 subfamily. In terms of assembly, homodimer and homotetramer. Interacts (via J domain) with HSPA8/Hsc70. Forms a multiprotein complex, at least composed of DNAJB12, DNAJB14, HSPA8/Hsc70 and SGTA; interaction with DNAJB14 and HSPA8/Hsc70 is direct. In terms of processing, methylated at His-186 by METTL9.

It is found in the endoplasmic reticulum membrane. The protein localises to the nucleus membrane. In terms of biological role, acts as a co-chaperone with HSPA8/Hsc70; required to promote protein folding and trafficking, prevent aggregation of client proteins, and promote unfolded proteins to endoplasmic reticulum-associated degradation (ERAD) pathway. Acts by determining HSPA8/Hsc70's ATPase and polypeptide-binding activities. Can also act independently of HSPA8/Hsc70: together with DNAJB14, acts as a chaperone that promotes maturation of potassium channels KCND2 and KCNH2 by stabilizing nascent channel subunits and assembling them into tetramers. While stabilization of nascent channel proteins is dependent on HSPA8/Hsc70, the process of oligomerization of channel subunits is independent of HSPA8/Hsc70. When overexpressed, forms membranous structures together with DNAJB14 and HSPA8/Hsc70 within the nucleus; the role of these structures, named DJANGOs, is still unclear. This chain is DnaJ homolog subfamily B member 12, found in Mus musculus (Mouse).